The sequence spans 126 residues: Small ribosomal subunit protein bS6 (126 aa).

A disordered region spans residues 104–126 (QGAEKGKSSSKKVAAEAEASEEA).

Belongs to the bacterial ribosomal protein bS6 family.

In terms of biological role, binds together with bS18 to 16S ribosomal RNA. This Coxiella burnetii (strain Dugway 5J108-111) protein is Small ribosomal subunit protein bS6.